Reading from the N-terminus, the 146-residue chain is Hemoglobin subunit beta (146 aa).

In terms of domain architecture, Globin spans 2–146; the sequence is HWTAEEKSAI…VAHALAHQYH (145 aa). Residues H63 and H92 each coordinate heme b.

It belongs to the globin family. Heterotetramer of two alpha chains and two beta chains. Oxygenation results in dissociation to dimers. Red blood cells.

Its function is as follows. Involved in oxygen transport from the lung to the various peripheral tissues. The sequence is that of Hemoglobin subunit beta (HBB) from Erythrolamprus miliaris (South American water snake).